The following is a 297-amino-acid chain: MGFVKVVKNKQYFKRYQVKFKRRREGKTDYFARKRLIAQDKNKYNTPKYRLVVRFSNRDITCQVAYSRIEGDKILCAAYAHELPQYGVKVGLTNYAAAYCTGLLLARKLLSQLGLDKLYIGSTEVTGEEFNVKPVEDGPGAFRCYLDVGLMRTTTGARVFGAMKGAVDGGLNILHSTKRFPGFDSESKEFNADVHRQHIFGQHVAEYMRQLAEEDDEAYKRQFSQYIKLGLNADAIEGLYKKAHEAIRANPARKTVAKKAHPKKRWTEKKLTREQRQGKVAAAKAEWLKKIEAGEVE.

Over residues K258–T267 the composition is skewed to basic residues. The segment at K258–Q277 is disordered. The span at E268 to Q277 shows a compositional bias: basic and acidic residues.

Belongs to the universal ribosomal protein uL18 family. In terms of assembly, component of the large ribosomal subunit (LSU).

It is found in the cytoplasm. Its subcellular location is the nucleus. In terms of biological role, component of the ribosome, a large ribonucleoprotein complex responsible for the synthesis of proteins in the cell. The small ribosomal subunit (SSU) binds messenger RNAs (mRNAs) and translates the encoded message by selecting cognate aminoacyl-transfer RNA (tRNA) molecules. The large subunit (LSU) contains the ribosomal catalytic site termed the peptidyl transferase center (PTC), which catalyzes the formation of peptide bonds, thereby polymerizing the amino acids delivered by tRNAs into a polypeptide chain. The nascent polypeptides leave the ribosome through a tunnel in the LSU and interact with protein factors that function in enzymatic processing, targeting, and the membrane insertion of nascent chains at the exit of the ribosomal tunnel. This is Large ribosomal subunit protein uL18 (RPL5A) from Helianthus annuus (Common sunflower).